The primary structure comprises 244 residues: DNA polymerase sliding clamp (244 aa).

It belongs to the PCNA family. As to quaternary structure, homotrimer. The subunits circularize to form a toroid; DNA passes through its center. Replication factor C (RFC) is required to load the toroid on the DNA.

In terms of biological role, sliding clamp subunit that acts as a moving platform for DNA processing. Responsible for tethering the catalytic subunit of DNA polymerase and other proteins to DNA during high-speed replication. The polypeptide is DNA polymerase sliding clamp (Methanobrevibacter smithii (strain ATCC 35061 / DSM 861 / OCM 144 / PS)).